The sequence spans 569 residues: Urease subunit alpha (569 aa).

In terms of domain architecture, Urease spans Gly-131–Phe-569. The Ni(2+) site is built by His-136, His-138, and Lys-219. The residue at position 219 (Lys-219) is an N6-carboxylysine. His-221 provides a ligand contact to substrate. Residues His-248 and His-274 each contribute to the Ni(2+) site. His-322 acts as the Proton donor in catalysis. Asp-362 serves as a coordination point for Ni(2+).

This sequence belongs to the metallo-dependent hydrolases superfamily. Urease alpha subunit family. As to quaternary structure, heterotrimer of UreA (gamma), UreB (beta) and UreC (alpha) subunits. Three heterotrimers associate to form the active enzyme. Ni cation is required as a cofactor. Carboxylation allows a single lysine to coordinate two nickel ions.

It localises to the cytoplasm. The catalysed reaction is urea + 2 H2O + H(+) = hydrogencarbonate + 2 NH4(+). It functions in the pathway nitrogen metabolism; urea degradation; CO(2) and NH(3) from urea (urease route): step 1/1. The chain is Urease subunit alpha from Geobacillus kaustophilus (strain HTA426).